A 383-amino-acid polypeptide reads, in one-letter code: uncharacterized protein (383 aa).

Disordered regions lie at residues 1–30 (MDLC…PTCT), 114–144 (ETKP…STAS), 262–289 (GEKR…ARTS), and 341–360 (AKDP…NSPQ). Residues 10–26 (DLENGENNEIQSTEETE) are compositionally biased toward acidic residues. The segment covering 128-141 (SSPSQTQAAPQGPS) has biased composition (low complexity). Residues 262–271 (GEKRPSELAK) are compositionally biased toward basic and acidic residues.

This is an uncharacterized protein from Macaca fascicularis (Crab-eating macaque).